We begin with the raw amino-acid sequence, 466 residues long: Cysteine--tRNA ligase (466 aa).

Residue Cys27 participates in Zn(2+) binding. Residues 29–39 (PTVYDLAHIGN) carry the 'HIGH' region motif. Zn(2+) contacts are provided by Cys211, His236, and Glu240. The 'KMSKS' region motif lies at 270–274 (KMSKS). Lys273 is a binding site for ATP.

This sequence belongs to the class-I aminoacyl-tRNA synthetase family. Monomer. Requires Zn(2+) as cofactor.

The protein resides in the cytoplasm. It carries out the reaction tRNA(Cys) + L-cysteine + ATP = L-cysteinyl-tRNA(Cys) + AMP + diphosphate. This is Cysteine--tRNA ligase from Anaplasma marginale (strain St. Maries).